A 608-amino-acid chain; its full sequence is Afamin (608 aa).

Positions 1–21 (MRHLKLTGFIFFLLSLTESLA) are cleaved as a signal peptide. Albumin domains lie at 22-210 (LPTK…APIT), 211-403 (QYLK…KFNE), and 404-599 (TTER…KTGD). Asn33 is a glycosylation site (N-linked (GlcNAc...) asparagine). Intrachain disulfides connect Cys77-Cys86, Cys99-Cys114, Cys113-Cys124, Cys148-Cys193, Cys224-Cys270, Cys269-Cys277, Cys289-Cys303, Cys302-Cys313, Cys340-Cys385, and Cys384-Cys393. An N-linked (GlcNAc...) asparagine glycan is attached at Asn109. N-linked (GlcNAc...) asparagine glycosylation occurs at Asn153. The binding pocket for hydrophobic ligands stretch occupies residues 215–319 (ALSSYQRNVC…RADCIINANK (105 aa)). N-linked (GlcNAc...) asparagine glycosylation occurs at Asn402. Disulfide bonds link Cys416/Cys462, Cys461/Cys470, Cys483/Cys499, Cys498/Cys509, and Cys580/Cys589. Asn488 carries an N-linked (GlcNAc...) asparagine glycan. Positions 585–608 (KPEACFSPESSKTGDVSQDAEKQR) are disordered.

Belongs to the ALB/AFP/VDB family. Forms a 1:1 complex with Wnt family members; interacts with WNT1, WNT2B, WNT3, WNT3A, WNT5A, WNT7A, WNT7B, WNT8, WNT9A, WNT9B, WNT10A and WNT10B. N-glycosylated; more than 90% of the glycans are sialylated.

Its subcellular location is the secreted. Its function is as follows. Functions as a carrier for hydrophobic molecules in body fluids. Essential for the solubility and activity of lipidated Wnt family members, including WNT1, WNT2B, WNT3, WNT3A, WNT5A, WNT7A, WNT7B, WNT8, WNT9A, WNT9B, WNT10A and WNT10B. Binds vitamin E. May transport vitamin E in body fluids under conditions where the lipoprotein system is not sufficient. May be involved in the transport of vitamin E across the blood-brain barrier. This chain is Afamin (Afm), found in Rattus norvegicus (Rat).